A 161-amino-acid polypeptide reads, in one-letter code: Putative 4-hydroxy-4-methyl-2-oxoglutarate aldolase (161 aa).

Residues 75-78 (GDML) and R97 each bind substrate. D98 lines the a divalent metal cation pocket.

Belongs to the class II aldolase/RraA-like family. In terms of assembly, homotrimer. It depends on a divalent metal cation as a cofactor.

It carries out the reaction 4-hydroxy-4-methyl-2-oxoglutarate = 2 pyruvate. The catalysed reaction is oxaloacetate + H(+) = pyruvate + CO2. In terms of biological role, catalyzes the aldol cleavage of 4-hydroxy-4-methyl-2-oxoglutarate (HMG) into 2 molecules of pyruvate. Also contains a secondary oxaloacetate (OAA) decarboxylase activity due to the common pyruvate enolate transition state formed following C-C bond cleavage in the retro-aldol and decarboxylation reactions. The sequence is that of Putative 4-hydroxy-4-methyl-2-oxoglutarate aldolase from Marinomonas sp. (strain MWYL1).